The primary structure comprises 232 residues: Large ribosomal subunit protein uL1 (232 aa).

It belongs to the universal ribosomal protein uL1 family. Part of the 50S ribosomal subunit.

In terms of biological role, binds directly to 23S rRNA. The L1 stalk is quite mobile in the ribosome, and is involved in E site tRNA release. Functionally, protein L1 is also a translational repressor protein, it controls the translation of the L11 operon by binding to its mRNA. This chain is Large ribosomal subunit protein uL1, found in Xanthomonas oryzae pv. oryzae (strain MAFF 311018).